The sequence spans 141 residues: Protein X (141 aa).

The disordered stretch occupies residues 24–52; the sequence is QSSGPPFPRPAAGSAASSTSSPSPSDESD. A compositionally biased stretch (low complexity) spans 33 to 48; that stretch reads PAAGSAASSTSSPSPS. The segment at 68 to 113 is mitochondrial targeting sequence; that stretch reads PCCLVFTCADLRTMDSTVNFVSWHAKRQLGMPSKDLWTPYIKDQLL.

This sequence belongs to the orthohepadnavirus protein X family. As to quaternary structure, may form homodimer. May interact with host CEBPA, CFLAR, CREB1, DDB1, E4F1, HBXIP, HSPD1/HSP60, NFKBIA, POLR2E and SMAD4. Interacts with host SMC5-SMC6 complex and induces its degradation. Interacts with host TRPC4AP; leading to prevent ubiquitination of TRPC4AP. Interacts with host PLSCR1; this interaction promotes ubiquitination and degradation of HBx and impairs HBx-mediated cell proliferation. Post-translationally, a fraction may be phosphorylated in insect cells and HepG2 cells, a human hepatoblastoma cell line. Phosphorylated in vitro by host protein kinase C or mitogen-activated protein kinase. N-acetylated in insect cells.

Its subcellular location is the host cytoplasm. The protein resides in the host nucleus. The protein localises to the host mitochondrion. In terms of biological role, multifunctional protein that plays a role in silencing host antiviral defenses and promoting viral transcription. Does not seem to be essential for HBV infection. May be directly involved in development of cirrhosis and liver cancer (hepatocellular carcinoma). Most of cytosolic activities involve modulation of cytosolic calcium. The effect on apoptosis is controversial depending on the cell types in which the studies have been conducted. May induce apoptosis by localizing in mitochondria and causing loss of mitochondrial membrane potential. May also modulate apoptosis by binding host CFLAR, a key regulator of the death-inducing signaling complex (DISC). Promotes viral transcription by using the host E3 ubiquitin ligase DDB1 to target the SMC5-SMC6 complex to proteasomal degradation. This host complex would otherwise bind to viral episomal DNA, and prevents its transcription. Moderately stimulates transcription of many different viral and cellular transcription elements. Promoters and enhancers stimulated by HBx contain DNA binding sites for NF-kappa-B, AP-1, AP-2, c-EBP, ATF/CREB, or the calcium-activated factor NF-AT. The polypeptide is Protein X (Marmota monax (Woodchuck)).